The sequence spans 134 residues: Transcription antitermination protein NusB (134 aa).

This sequence belongs to the NusB family.

Involved in transcription antitermination. Required for transcription of ribosomal RNA (rRNA) genes. Binds specifically to the boxA antiterminator sequence of the ribosomal RNA (rrn) operons. The sequence is that of Transcription antitermination protein NusB from Shewanella baltica (strain OS223).